Consider the following 543-residue polypeptide: UPF0324 membrane protein RB9488 (543 aa).

Low complexity predominate over residues 1-22 (MNSNTPSSDNSSPDNVSPDTSD). The segment at 1-41 (MNSNTPSSDNSSPDNVSPDTSDMASAGDDSALATPPPRPSL) is disordered. A helical membrane pass occupies residues 51 to 73 (WWAIWCAALLLLIAFAAVWIGQP). The segment at 91-120 (VETAPENAGPSAEAENEAIETENTAPAENA) is disordered. The next 11 membrane-spanning stretches (helical) occupy residues 160–182 (ISSS…AFAN), 189–211 (AGAF…WMSG), 221–243 (EYAL…PDFL), 270–292 (LALG…ITTY), 307–329 (NMVI…AAAC), 336–358 (LSLS…PAVI), 368–390 (GGAW…AVLG), 403–422 (IQNI…WVTF), 437–459 (IWYR…SILY), 479–496 (TLRG…GLET), and 511–533 (LVLY…YLMF).

It belongs to the UPF0324 family.

The protein localises to the cell membrane. In Rhodopirellula baltica (strain DSM 10527 / NCIMB 13988 / SH1), this protein is UPF0324 membrane protein RB9488.